Here is a 96-residue protein sequence, read N- to C-terminus: MAGMMKKQVVTALMLALVVLAAAPGGARAACQASQLAVCASAILSGAKPSGECCGNLRAQQGCFCQYAKDPTYGQYIRSPHARDTLTSCGLAVPHC.

The N-terminal stretch at 1–29 (MAGMMKKQVVTALMLALVVLAAAPGGARA) is a signal peptide. 4 cysteine pairs are disulfide-bonded: Cys-31–Cys-63, Cys-39–Cys-53, Cys-54–Cys-89, and Cys-65–Cys-96.

The protein localises to the secreted. It localises to the cell wall. Its function is as follows. Transfer lipids across membranes. May play a role in plant defense or in the biosynthesis of cuticle layers. This is Non-specific lipid-transfer protein 2G from Triticum aestivum (Wheat).